The following is a 453-amino-acid chain: Bifunctional protein GlmU (453 aa).

The segment at 1-227 (MTQLSVVILA…LMEVEGANNR (227 aa)) is pyrophosphorylase. Residues 9–12 (LAAG), lysine 23, glutamine 74, 79–80 (GT), 101–103 (YGD), glycine 138, glutamate 152, asparagine 167, and asparagine 225 each bind UDP-N-acetyl-alpha-D-glucosamine. Aspartate 103 is a Mg(2+) binding site. Asparagine 225 lines the Mg(2+) pocket. The segment at 228–248 (LQLAALERYYQKIQAEKLLLA) is linker. Residues 249–453 (GVTIIDPARF…IQGWQRPTKK (205 aa)) are N-acetyltransferase. Residues arginine 331 and lysine 349 each coordinate UDP-N-acetyl-alpha-D-glucosamine. Histidine 361 (proton acceptor) is an active-site residue. UDP-N-acetyl-alpha-D-glucosamine-binding residues include tyrosine 364 and asparagine 375. Acetyl-CoA-binding positions include alanine 378, 384–385 (NY), serine 403, alanine 421, and arginine 438.

The protein in the N-terminal section; belongs to the N-acetylglucosamine-1-phosphate uridyltransferase family. In the C-terminal section; belongs to the transferase hexapeptide repeat family. As to quaternary structure, homotrimer. Mg(2+) serves as cofactor.

It is found in the cytoplasm. It catalyses the reaction alpha-D-glucosamine 1-phosphate + acetyl-CoA = N-acetyl-alpha-D-glucosamine 1-phosphate + CoA + H(+). The enzyme catalyses N-acetyl-alpha-D-glucosamine 1-phosphate + UTP + H(+) = UDP-N-acetyl-alpha-D-glucosamine + diphosphate. Its pathway is nucleotide-sugar biosynthesis; UDP-N-acetyl-alpha-D-glucosamine biosynthesis; N-acetyl-alpha-D-glucosamine 1-phosphate from alpha-D-glucosamine 6-phosphate (route II): step 2/2. It participates in nucleotide-sugar biosynthesis; UDP-N-acetyl-alpha-D-glucosamine biosynthesis; UDP-N-acetyl-alpha-D-glucosamine from N-acetyl-alpha-D-glucosamine 1-phosphate: step 1/1. It functions in the pathway bacterial outer membrane biogenesis; LPS lipid A biosynthesis. Catalyzes the last two sequential reactions in the de novo biosynthetic pathway for UDP-N-acetylglucosamine (UDP-GlcNAc). The C-terminal domain catalyzes the transfer of acetyl group from acetyl coenzyme A to glucosamine-1-phosphate (GlcN-1-P) to produce N-acetylglucosamine-1-phosphate (GlcNAc-1-P), which is converted into UDP-GlcNAc by the transfer of uridine 5-monophosphate (from uridine 5-triphosphate), a reaction catalyzed by the N-terminal domain. The protein is Bifunctional protein GlmU of Glaesserella parasuis serovar 5 (strain SH0165) (Haemophilus parasuis).